We begin with the raw amino-acid sequence, 103 residues long: Small ribosomal subunit protein uS10 (103 aa).

The protein belongs to the universal ribosomal protein uS10 family. Part of the 30S ribosomal subunit.

In terms of biological role, involved in the binding of tRNA to the ribosomes. The chain is Small ribosomal subunit protein uS10 from Pseudomonas savastanoi pv. phaseolicola (strain 1448A / Race 6) (Pseudomonas syringae pv. phaseolicola (strain 1448A / Race 6)).